Here is a 229-residue protein sequence, read N- to C-terminus: LexA repressor (229 aa).

Residues 26-46 (FDEMKEALDLASKSGIHRLIT) constitute a DNA-binding region (H-T-H motif). Catalysis depends on for autocatalytic cleavage activity residues S149 and K187.

This sequence belongs to the peptidase S24 family. In terms of assembly, homodimer.

The enzyme catalyses Hydrolysis of Ala-|-Gly bond in repressor LexA.. Represses a number of genes involved in the response to DNA damage (SOS response), including recA and lexA. In the presence of single-stranded DNA, RecA interacts with LexA causing an autocatalytic cleavage which disrupts the DNA-binding part of LexA, leading to derepression of the SOS regulon and eventually DNA repair. This Phenylobacterium zucineum (strain HLK1) protein is LexA repressor.